A 662-amino-acid polypeptide reads, in one-letter code: UvrABC system protein B (662 aa).

The 390-residue stretch at 25–414 (AGLNSKKRSQ…GTVVELIIRP (390 aa)) folds into the Helicase ATP-binding domain. An ATP-binding site is contributed by 38 to 45 (GITGSGKT). A Beta-hairpin motif is present at residues 91–114 (YYDYYQPEAYIVRTDTFIEKDSSI). Positions 430 to 592 (QVEDLISEIQ…IIPKTINSAI (163 aa)) constitute a Helicase C-terminal domain. Positions 622 to 657 (KSYMDKLKKEMFKAASNLEFEQAAKLRNQLKTLEKA) constitute a UVR domain.

The protein belongs to the UvrB family. Forms a heterotetramer with UvrA during the search for lesions. Interacts with UvrC in an incision complex.

Its subcellular location is the cytoplasm. The UvrABC repair system catalyzes the recognition and processing of DNA lesions. A damage recognition complex composed of 2 UvrA and 2 UvrB subunits scans DNA for abnormalities. Upon binding of the UvrA(2)B(2) complex to a putative damaged site, the DNA wraps around one UvrB monomer. DNA wrap is dependent on ATP binding by UvrB and probably causes local melting of the DNA helix, facilitating insertion of UvrB beta-hairpin between the DNA strands. Then UvrB probes one DNA strand for the presence of a lesion. If a lesion is found the UvrA subunits dissociate and the UvrB-DNA preincision complex is formed. This complex is subsequently bound by UvrC and the second UvrB is released. If no lesion is found, the DNA wraps around the other UvrB subunit that will check the other stand for damage. This Rickettsia typhi (strain ATCC VR-144 / Wilmington) protein is UvrABC system protein B.